Here is a 201-residue protein sequence, read N- to C-terminus: Small ribosomal subunit protein uS4 (201 aa).

The 64-residue stretch at arginine 93 to valine 156 folds into the S4 RNA-binding domain.

It belongs to the universal ribosomal protein uS4 family. In terms of assembly, part of the 30S ribosomal subunit. Contacts protein S5. The interaction surface between S4 and S5 is involved in control of translational fidelity.

In terms of biological role, one of the primary rRNA binding proteins, it binds directly to 16S rRNA where it nucleates assembly of the body of the 30S subunit. Functionally, with S5 and S12 plays an important role in translational accuracy. This Limosilactobacillus reuteri subsp. reuteri (strain JCM 1112) (Lactobacillus reuteri) protein is Small ribosomal subunit protein uS4.